The primary structure comprises 329 residues: Delta-aminolevulinic acid dehydratase (329 aa).

3 residues coordinate Zn(2+): cysteine 122, cysteine 124, and cysteine 132. Lysine 199 functions as the Schiff-base intermediate with substrate in the catalytic mechanism. Positions 209 and 221 each coordinate 5-aminolevulinate. Lysine 252 functions as the Schiff-base intermediate with substrate in the catalytic mechanism. Residues serine 279 and tyrosine 318 each contribute to the 5-aminolevulinate site.

This sequence belongs to the ALAD family. Homooctamer. The cofactor is Zn(2+).

The catalysed reaction is 2 5-aminolevulinate = porphobilinogen + 2 H2O + H(+). It functions in the pathway porphyrin-containing compound metabolism; protoporphyrin-IX biosynthesis; coproporphyrinogen-III from 5-aminolevulinate: step 1/4. Catalyzes an early step in the biosynthesis of tetrapyrroles. Binds two molecules of 5-aminolevulinate per subunit, each at a distinct site, and catalyzes their condensation to form porphobilinogen. This is Delta-aminolevulinic acid dehydratase (hem2) from Schizosaccharomyces pombe (strain 972 / ATCC 24843) (Fission yeast).